Consider the following 152-residue polypeptide: Ferredoxin-thioredoxin reductase catalytic chain, chloroplastic (152 aa).

The transit peptide at 1 to 38 directs the protein to the chloroplast; sequence MTSTVTTTVGCGGLPVRPLSTATRGRPRRCAVRAQAAG. Residue Cys-91 coordinates [4Fe-4S] cluster. Cys-93 serves as the catalytic Nucleophile. A disulfide bond links Cys-93 and Cys-123. [4Fe-4S] cluster contacts are provided by Cys-110, Cys-112, and Cys-121.

Belongs to the ferredoxin thioredoxin reductase beta subunit family. Heterodimer of subunit A (variable subunit) and subunit B (catalytic subunit). Heterodimeric FTR forms a complex with ferredoxin and thioredoxin. It depends on [4Fe-4S] cluster as a cofactor.

It is found in the plastid. The protein localises to the chloroplast. The enzyme catalyses [thioredoxin]-disulfide + 2 reduced [2Fe-2S]-[ferredoxin] + 2 H(+) = [thioredoxin]-dithiol + 2 oxidized [2Fe-2S]-[ferredoxin]. Catalytic subunit of the ferredoxin-thioredoxin reductase (FTR), which catalyzes the two-electron reduction of thioredoxins by the electrons provided by reduced ferredoxin. The chain is Ferredoxin-thioredoxin reductase catalytic chain, chloroplastic (FTRC) from Zea mays (Maize).